The primary structure comprises 417 residues: Dibenzothiophene monooxygenase (417 aa).

Residues 18–124 form a helical N-terminus region; sequence NDPVAVARGL…HLYTQIAQNN (107 aa). Residues Y96, 129–134, 159–163, R282, 369–370, and H391 contribute to the FMN site; these read NASSEN, KHFCS, and AR. Residues 125 to 233 form a central beta-barrel N-terminus region; the sequence is WWTGNASSEN…KVEPDEVLGA (109 aa). The lid loop stretch occupies residues 131–142; it reads SSENNSHVLDWK. Residues 234-417 form a helical C-terminus region; sequence PNAFVLAFIQ…GQYPIPGFTS (184 aa).

The protein belongs to the DszC flavin monooxygenase family. Homotetramer formed by a dimer of dimers; FMN binds between monomers of the homodimer.

The protein localises to the cytoplasm. It carries out the reaction dibenzothiophene + 2 FMNH2 + 2 O2 = dibenzothiophene 5,5-dioxide + 2 FMN + 2 H2O + 2 H(+). It catalyses the reaction dibenzothiophene + FMNH2 + O2 = dibenzothiophene 5-oxide + FMN + H2O + H(+). The enzyme catalyses dibenzothiophene 5-oxide + FMNH2 + O2 = dibenzothiophene 5,5-dioxide + FMN + H2O + H(+). It participates in sulfur metabolism; dibenzothiophene degradation. DBT degradation completely inhibited by Cu(2+), Mn(2+), p-chloromercuribenzoic acid, 2,2-bipyridyl, 1,10-phenanthroline, and strongly inhibited by Zn(2+), 5,5'- Dithiobis(2-nitrobenzoic acid) and 8-quinolinol. Its function is as follows. Catalyzes the first step of the '4S' desulfurization pathway that removes covalently bound sulfur from dibenzothiophene (DBT) without breaking carbon-carbon bonds. Sulfur dioxygenase which converts DBT to DBT-sulfone (DBTO2 or DBT 5,5-dioxide) in a stepwise manner. Also acts on thioxanthen-9-one and 4,6-dimethyl DBT and 2,8-dimethyl DBT. The sequence is that of Dibenzothiophene monooxygenase from Rhodococcus erythropolis (Arthrobacter picolinophilus).